Here is a 233-residue protein sequence, read N- to C-terminus: Coproporphyrinogen-III oxidase 2, chloroplastic (233 aa).

The N-terminal 48 residues, M1–S48, are a transit peptide targeting the chloroplast. S174 contributes to the substrate binding site. H188 serves as the catalytic Proton donor.

This sequence belongs to the aerobic coproporphyrinogen-III oxidase family. Homodimer.

It is found in the plastid. The protein resides in the chloroplast. It catalyses the reaction coproporphyrinogen III + O2 + 2 H(+) = protoporphyrinogen IX + 2 CO2 + 2 H2O. It participates in porphyrin-containing compound metabolism; protoporphyrin-IX biosynthesis; protoporphyrinogen-IX from coproporphyrinogen-III (O2 route): step 1/1. Its pathway is porphyrin-containing compound metabolism; chlorophyll biosynthesis. Its function is as follows. Key enzyme in heme biosynthesis. Catalyzes the oxidative decarboxylation of propionic acid side chains of rings A and B of coproporphyrinogen III. The chain is Coproporphyrinogen-III oxidase 2, chloroplastic (CPX2) from Arabidopsis thaliana (Mouse-ear cress).